We begin with the raw amino-acid sequence, 140 residues long: Ribosomal RNA large subunit methyltransferase H (140 aa).

Leu-55 and Gly-87 together coordinate S-adenosyl-L-methionine.

Belongs to the RNA methyltransferase RlmH family. In terms of assembly, homodimer.

Its subcellular location is the cytoplasm. It catalyses the reaction pseudouridine(1915) in 23S rRNA + S-adenosyl-L-methionine = N(3)-methylpseudouridine(1915) in 23S rRNA + S-adenosyl-L-homocysteine + H(+). Specifically methylates the pseudouridine at position 1915 (m3Psi1915) in 23S rRNA. In Rhizorhabdus wittichii (strain DSM 6014 / CCUG 31198 / JCM 15750 / NBRC 105917 / EY 4224 / RW1) (Sphingomonas wittichii), this protein is Ribosomal RNA large subunit methyltransferase H.